A 309-amino-acid chain; its full sequence is Sulfate adenylyltransferase subunit 2 (309 aa).

Belongs to the PAPS reductase family. CysD subfamily. Heterodimer composed of CysD, the smaller subunit, and CysN.

The catalysed reaction is sulfate + ATP + H(+) = adenosine 5'-phosphosulfate + diphosphate. The protein operates within sulfur metabolism; hydrogen sulfide biosynthesis; sulfite from sulfate: step 1/3. In terms of biological role, with CysN forms the ATP sulfurylase (ATPS) that catalyzes the adenylation of sulfate producing adenosine 5'-phosphosulfate (APS) and diphosphate, the first enzymatic step in sulfur assimilation pathway. APS synthesis involves the formation of a high-energy phosphoric-sulfuric acid anhydride bond driven by GTP hydrolysis by CysN coupled to ATP hydrolysis by CysD. This Methylorubrum populi (strain ATCC BAA-705 / NCIMB 13946 / BJ001) (Methylobacterium populi) protein is Sulfate adenylyltransferase subunit 2.